The chain runs to 446 residues: Glucarate dehydratase (446 aa).

The substrate site is built by histidine 32, threonine 103, tyrosine 150, and lysine 205. Residue lysine 207 is the Proton acceptor of the active site. 3 residues coordinate Mg(2+): aspartate 235, glutamate 266, and asparagine 289. 235-237 contributes to the substrate binding site; it reads DPN. Substrate contacts are provided by residues asparagine 289, 339–341, histidine 368, and arginine 422; that span reads HSN. Histidine 339 acts as the Proton acceptor in catalysis.

This sequence belongs to the mandelate racemase/muconate lactonizing enzyme family. GlucD subfamily. In terms of assembly, homodimer. Requires Mg(2+) as cofactor.

The catalysed reaction is D-glucarate = 5-dehydro-4-deoxy-D-glucarate + H2O. It functions in the pathway carbohydrate acid metabolism; D-glucarate degradation; 2,5-dioxopentanoate from D-glucarate: step 1/2. Functionally, catalyzes the dehydration of glucarate to 5-keto-4-deoxy-D-glucarate (5-kdGluc). Also acts on L-idarate. The sequence is that of Glucarate dehydratase (gudD) from Escherichia coli O157:H7.